The primary structure comprises 606 residues: Aspartate--tRNA(Asp/Asn) ligase (606 aa).

E196 is a binding site for L-aspartate. The tract at residues 220 to 223 is aspartate; it reads QIFK. R242 serves as a coordination point for L-aspartate. ATP-binding positions include 242 to 244 and Q251; that span reads RDE. L-aspartate is bound at residue H465. E499 is a binding site for ATP. R506 serves as a coordination point for L-aspartate. 551–554 provides a ligand contact to ATP; that stretch reads GMDR.

This sequence belongs to the class-II aminoacyl-tRNA synthetase family. Type 1 subfamily. Homodimer.

It localises to the cytoplasm. The catalysed reaction is tRNA(Asx) + L-aspartate + ATP = L-aspartyl-tRNA(Asx) + AMP + diphosphate. Aspartyl-tRNA synthetase with relaxed tRNA specificity since it is able to aspartylate not only its cognate tRNA(Asp) but also tRNA(Asn). Reaction proceeds in two steps: L-aspartate is first activated by ATP to form Asp-AMP and then transferred to the acceptor end of tRNA(Asp/Asn). This Oleidesulfovibrio alaskensis (strain ATCC BAA-1058 / DSM 17464 / G20) (Desulfovibrio alaskensis) protein is Aspartate--tRNA(Asp/Asn) ligase.